The sequence spans 526 residues: Ubiquitin carboxyl-terminal hydrolase 17-like protein A (526 aa).

Positions 1–21 (MVVALSFPEADPALSSPDAPE) are disordered. In terms of domain architecture, USP spans 51 to 348 (CGLQNTGNSC…NAYVLFYVQQ (298 aa)). The active-site Nucleophile is the Cys-60. His-307 serves as the catalytic Proton acceptor. Positions 374-385 (KKSRRKKHKKKS) are enriched in basic residues. 2 disordered regions span residues 374–394 (KKSRRKKHKKKSPFTEDLGEP) and 465–494 (RSTANWGRDSPDKENQPLHNADRLLTSQGP). Residues 473-486 (DSPDKENQPLHNAD) are compositionally biased toward basic and acidic residues.

The protein belongs to the peptidase C19 family. In terms of processing, polyubiquitinated; ubiquitination leads to its subsequent degradation. As to expression, expressed in hematopoietic progenitor cell lines Ba/F3 and FDCP1. Not detected in brain, lung, liver, kidney, thymus, spleen and bone marrow.

It carries out the reaction Thiol-dependent hydrolysis of ester, thioester, amide, peptide and isopeptide bonds formed by the C-terminal Gly of ubiquitin (a 76-residue protein attached to proteins as an intracellular targeting signal).. In terms of biological role, deubiquitinating enzyme that removes conjugated ubiquitin from specific proteins to regulate different cellular processes. Has deubiquitinating enzyme activity for DNAH5, suggesting a role in the regulation of DNAH5 degradation by the ubiquitin-proteasome pathway. Has growth-suppressing activity; induces arrest in G1 phase upon controlled expression. The protein is Ubiquitin carboxyl-terminal hydrolase 17-like protein A (Usp17la) of Mus musculus (Mouse).